We begin with the raw amino-acid sequence, 697 residues long: PHD finger protein At2g01810 (697 aa).

2 disordered regions span residues 319–362 (DENS…QYYS) and 457–478 (EQKR…TSTT). The span at 339–349 (SGRDTVLDDHN) shows a compositional bias: basic and acidic residues. Residues 635 to 685 (TVDCKCGARDDDGERMVACDACKVWHHTLCNSIEDDEAVPSVFLCNMCYGD) form a PHD-type zinc finger.

It is found in the nucleus. The sequence is that of PHD finger protein At2g01810 from Arabidopsis thaliana (Mouse-ear cress).